A 246-amino-acid polypeptide reads, in one-letter code: UDP-N-acetyl-D-mannosaminuronic acid transferase (246 aa).

It belongs to the glycosyltransferase 26 family.

It catalyses the reaction UDP-N-acetyl-alpha-D-mannosaminouronate + N-acetyl-alpha-D-glucosaminyl-di-trans,octa-cis-undecaprenyl diphosphate = beta-D-ManNAcA-(1-&gt;4)-alpha-D-GlcNAc-di-trans,octa-cis-undecaprenyl diphosphate + UDP + H(+). Its pathway is bacterial outer membrane biogenesis; enterobacterial common antigen biosynthesis. Functionally, catalyzes the synthesis of Und-PP-GlcNAc-ManNAcA (Lipid II), the second lipid-linked intermediate involved in enterobacterial common antigen (ECA) synthesis. This is UDP-N-acetyl-D-mannosaminuronic acid transferase from Yersinia pseudotuberculosis serotype IB (strain PB1/+).